A 361-amino-acid chain; its full sequence is Mitochondrial import receptor subunit TOM40 homolog (361 aa).

The span at 1–10 (MGNVLAASSP) shows a compositional bias: low complexity. The segment at 1-71 (MGNVLAASSP…AASAGGTADD (71 aa)) is disordered. Pro residues predominate over residues 11–36 (PAGPPPPPAPPLVGLPPPPPSPPGFT). A compositionally biased stretch (gly residues) spans 40-52 (LGGGLGAGAGTGR). A compositionally biased stretch (low complexity) spans 59 to 71 (GTAAASAGGTADD).

Belongs to the Tom40 family. As to quaternary structure, forms part of the preprotein translocase complex of the outer mitochondrial membrane (TOM complex) which consists of at least 7 different proteins (TOMM5, TOMM6, TOMM7, TOMM20, TOMM22, TOMM40 and TOMM70). Interacts with mitochondrial targeting sequences. Interacts with TIMM29; linking the TIM22 complex to the TOM complex. Forms a complex with BCAP31 (via C-terminus) which mediates the translocation of components of the mitochondrial membrane respiratory chain NADH dehydrogenase (Complex I) from the cytosol to the mitochondria. Interacts (via N-terminus) with CYP1A1 (via mitochondrial targeting signal); this interaction is required for CYP1A1 translocation across the mitochondrial outer membrane.

It is found in the mitochondrion outer membrane. In terms of biological role, channel-forming protein essential for import of protein precursors into mitochondria. Plays a role in the assembly of the mitochondrial membrane respiratory chain NADH dehydrogenase (Complex I) by forming a complex with BCAP31 and mediating the translocation of Complex I components from the cytosol to the mitochondria. The polypeptide is Mitochondrial import receptor subunit TOM40 homolog (Bos taurus (Bovine)).